The chain runs to 386 residues: DNA replication and repair protein RecF (386 aa).

30 to 37 (GSNGFGKT) is an ATP binding site.

This sequence belongs to the RecF family.

The protein localises to the cytoplasm. The RecF protein is involved in DNA metabolism; it is required for DNA replication and normal SOS inducibility. RecF binds preferentially to single-stranded, linear DNA. It also seems to bind ATP. The protein is DNA replication and repair protein RecF of Mycolicibacterium vanbaalenii (strain DSM 7251 / JCM 13017 / BCRC 16820 / KCTC 9966 / NRRL B-24157 / PYR-1) (Mycobacterium vanbaalenii).